The following is a 34-amino-acid chain: MPNLQTVAQLISLFLILTSGPAIIVLIALRRGNL.

The chain crosses the membrane as a helical span at residues 7–27 (VAQLISLFLILTSGPAIIVLI).

The protein belongs to the Psb30/Ycf12 family. As to quaternary structure, PSII is composed of 1 copy each of membrane proteins PsbA, PsbB, PsbC, PsbD, PsbE, PsbF, PsbH, PsbI, PsbJ, PsbK, PsbL, PsbM, PsbT, PsbX, PsbY, PsbZ, Psb30/Ycf12, peripheral proteins of the oxygen-evolving complex and a large number of cofactors. It forms dimeric complexes.

It localises to the plastid. The protein resides in the chloroplast thylakoid membrane. In terms of biological role, a core subunit of photosystem II (PSII), probably helps stabilize the reaction center. The protein is Photosystem II reaction center protein Psb30 of Rhodomonas salina (Cryptomonas salina).